A 322-amino-acid polypeptide reads, in one-letter code: MNISTLQLILETFSFFIYFILTFLFFAQAIFKNHWLKTFNFSGMLIANVSIFLLLITRWITAGYFPISNLYESLFFLVWGLNTIWLFLYKNNMRIQLLDNSVSLLLTLLVGFLHFILPQEMREISPLVPALKSNWLMMHVSVMMISYATLMIGSLLSIIYLYFLYRVDKLLNKINAVNLMTSNQNSNSLIYNLSFNTLLNSSKSMEYQILLKDLSLIKLSKRLDNLSYRLITFGFPLLTIGIIAGAVWANEAWGSYWSWDPKETWALITWLIFAIYLHTRIIKGWQGKKAAMVASLGFFIIWICYLGVNLLGKGIHSYGWFF.

A run of 8 helical transmembrane segments spans residues 6–26 (LQLI…FLFF), 45–65 (LIAN…AGYF), 69–89 (NLYE…LFLY), 97–117 (LLDN…HFIL), 144–164 (MISY…LYFL), 230–250 (LITF…VWAN), 265–285 (WALI…IKGW), and 291–311 (AMVA…VNLL).

The protein belongs to the CcmF/CycK/Ccl1/NrfE/CcsA family. In terms of assembly, may interact with Ccs1.

It is found in the plastid. Its subcellular location is the cyanelle thylakoid membrane. Its function is as follows. Required during biogenesis of c-type cytochromes (cytochrome c6 and cytochrome f) at the step of heme attachment. The chain is Cytochrome c biogenesis protein CcsA from Cyanophora paradoxa.